The primary structure comprises 372 residues: Queuine tRNA-ribosyltransferase (372 aa).

Catalysis depends on Asp-89, which acts as the Proton acceptor. Substrate-binding positions include 89–93, Asp-161, and Gly-232; that span reads DSGGF. The segment at 262–268 is RNA binding; the sequence is GIGDLPS. Asp-281 functions as the Nucleophile in the catalytic mechanism. An RNA binding; important for wobble base 34 recognition region spans residues 286–290; it reads TKAAR. Zn(2+) is bound by residues Cys-319, Cys-321, Cys-324, and His-351.

Belongs to the queuine tRNA-ribosyltransferase family. In terms of assembly, homodimer. Within each dimer, one monomer is responsible for RNA recognition and catalysis, while the other monomer binds to the replacement base PreQ1. Requires Zn(2+) as cofactor.

It carries out the reaction 7-aminomethyl-7-carbaguanine + guanosine(34) in tRNA = 7-aminomethyl-7-carbaguanosine(34) in tRNA + guanine. The protein operates within tRNA modification; tRNA-queuosine biosynthesis. Its function is as follows. Catalyzes the base-exchange of a guanine (G) residue with the queuine precursor 7-aminomethyl-7-deazaguanine (PreQ1) at position 34 (anticodon wobble position) in tRNAs with GU(N) anticodons (tRNA-Asp, -Asn, -His and -Tyr). Catalysis occurs through a double-displacement mechanism. The nucleophile active site attacks the C1' of nucleotide 34 to detach the guanine base from the RNA, forming a covalent enzyme-RNA intermediate. The proton acceptor active site deprotonates the incoming PreQ1, allowing a nucleophilic attack on the C1' of the ribose to form the product. After dissociation, two additional enzymatic reactions on the tRNA convert PreQ1 to queuine (Q), resulting in the hypermodified nucleoside queuosine (7-(((4,5-cis-dihydroxy-2-cyclopenten-1-yl)amino)methyl)-7-deazaguanosine). This is Queuine tRNA-ribosyltransferase from Chlamydia felis (strain Fe/C-56) (Chlamydophila felis).